The following is a 95-amino-acid chain: Nodulin (95 aa).

This chain is Nodulin, found in Striga hermonthica (Purple witchweed).